The following is a 181-amino-acid chain: Cell division protein ZapC (181 aa).

The protein belongs to the ZapC family. In terms of assembly, interacts directly with FtsZ.

It localises to the cytoplasm. In terms of biological role, contributes to the efficiency of the cell division process by stabilizing the polymeric form of the cell division protein FtsZ. Acts by promoting interactions between FtsZ protofilaments and suppressing the GTPase activity of FtsZ. The chain is Cell division protein ZapC from Shewanella woodyi (strain ATCC 51908 / MS32).